A 384-amino-acid polypeptide reads, in one-letter code: tRNA-specific 2-thiouridylase MnmA (384 aa).

ATP is bound by residues 9–16 (GMSGGVDS) and M35. An interaction with target base in tRNA region spans residues 95-97 (NPD). The active-site Nucleophile is the C100. Residues C100 and C196 are joined by a disulfide bond. ATP is bound at residue G124. The interaction with tRNA stretch occupies residues 146–148 (KDQ). C196 acts as the Cysteine persulfide intermediate in catalysis. Residues 308-309 (RY) form an interaction with tRNA region.

It belongs to the MnmA/TRMU family.

It is found in the cytoplasm. The catalysed reaction is S-sulfanyl-L-cysteinyl-[protein] + uridine(34) in tRNA + AH2 + ATP = 2-thiouridine(34) in tRNA + L-cysteinyl-[protein] + A + AMP + diphosphate + H(+). In terms of biological role, catalyzes the 2-thiolation of uridine at the wobble position (U34) of tRNA, leading to the formation of s(2)U34. This is tRNA-specific 2-thiouridylase MnmA from Burkholderia ambifaria (strain ATCC BAA-244 / DSM 16087 / CCUG 44356 / LMG 19182 / AMMD) (Burkholderia cepacia (strain AMMD)).